The chain runs to 162 residues: Nucleotide-binding protein ABSDF0503 (162 aa).

This sequence belongs to the YajQ family.

Functionally, nucleotide-binding protein. This chain is Nucleotide-binding protein ABSDF0503, found in Acinetobacter baumannii (strain SDF).